A 133-amino-acid polypeptide reads, in one-letter code: Nickel-responsive regulator (133 aa).

H76, H87, H89, and C95 together coordinate Ni(2+).

Belongs to the transcriptional regulatory CopG/NikR family. In terms of assembly, homotetramer. It depends on Ni(2+) as a cofactor.

Functionally, transcriptional repressor of the nikABCDE operon. Is active in the presence of excessive concentrations of intracellular nickel. This is Nickel-responsive regulator from Enterobacter sp. (strain 638).